A 123-amino-acid polypeptide reads, in one-letter code: Holo-[acyl-carrier-protein] synthase (123 aa).

Mg(2+)-binding residues include Asp8 and Glu56.

This sequence belongs to the P-Pant transferase superfamily. AcpS family. Mg(2+) serves as cofactor.

It is found in the cytoplasm. The catalysed reaction is apo-[ACP] + CoA = holo-[ACP] + adenosine 3',5'-bisphosphate + H(+). Transfers the 4'-phosphopantetheine moiety from coenzyme A to a Ser of acyl-carrier-protein. This Clostridium botulinum (strain Alaska E43 / Type E3) protein is Holo-[acyl-carrier-protein] synthase.